A 216-amino-acid chain; its full sequence is Adenylate kinase (216 aa).

10–15 (GAGKGT) lines the ATP pocket. Residues 30 to 59 (STGDILRENVKKGTALGLKAKSYMDKGELV) are NMP. AMP contacts are provided by residues T31, R36, 57–59 (ELV), 85–88 (GFPR), and Q92. The LID stretch occupies residues 126-163 (GRRICRSCGASYHLVFNPPKAKDLCDSCGGELYQRDDD). R127 contributes to the ATP binding site. Residues C130 and C133 each coordinate Zn(2+). Residue 136 to 137 (SY) participates in ATP binding. 2 residues coordinate Zn(2+): C150 and C153. AMP is bound by residues R160 and R171. Residue K199 participates in ATP binding.

Belongs to the adenylate kinase family. As to quaternary structure, monomer.

Its subcellular location is the cytoplasm. The catalysed reaction is AMP + ATP = 2 ADP. The protein operates within purine metabolism; AMP biosynthesis via salvage pathway; AMP from ADP: step 1/1. Catalyzes the reversible transfer of the terminal phosphate group between ATP and AMP. Plays an important role in cellular energy homeostasis and in adenine nucleotide metabolism. This Methanocella arvoryzae (strain DSM 22066 / NBRC 105507 / MRE50) protein is Adenylate kinase.